The sequence spans 552 residues: Membrane protein insertase YidC (552 aa).

5 helical membrane-spanning segments follow: residues 7–24, 364–384, 434–454, 473–493, and 508–528; these read VLWVIFFMSAVMLYDNWQ, WGWAIVLLTVLIKAVFFPLSA, LPVVIQIPVFISLYWVLLASV, PFFILPVLMAVSMFVQTSLNP, and PIAFSVMFFFFPAGLVLYYVV.

The protein belongs to the OXA1/ALB3/YidC family. Type 1 subfamily. Interacts with the Sec translocase complex via SecD. Specifically interacts with transmembrane segments of nascent integral membrane proteins during membrane integration.

The protein localises to the cell inner membrane. Required for the insertion and/or proper folding and/or complex formation of integral membrane proteins into the membrane. Involved in integration of membrane proteins that insert both dependently and independently of the Sec translocase complex, as well as at least some lipoproteins. Aids folding of multispanning membrane proteins. The protein is Membrane protein insertase YidC of Burkholderia cenocepacia (strain ATCC BAA-245 / DSM 16553 / LMG 16656 / NCTC 13227 / J2315 / CF5610) (Burkholderia cepacia (strain J2315)).